The chain runs to 486 residues: Adenylate kinase 8 (486 aa).

2 adenylate kinase regions span residues 58–258 (PRII…NFIC) and 269–471 (PRIL…SRLV). 67 to 72 (ASGKKT) contacts ATP. Positions 87–112 (TFCDILKDDSDLTRAAQSYYDKKQNV) are NMP 1. AMP contacts are provided by residues 139-142 (AIPK) and arginine 202. An LID 1 region spans residues 176–205 (GKRIDPVTGDVYHVTFMWPESEEVAQRLET). 278–283 (GAGRNL) serves as a coordination point for ATP. The NMP 2 stretch occupies residues 298-327 (CCGELLKAVSADESHMGELIKPYLESEQQV). AMP contacts are provided by residues 325–327 (QQV) and 354–357 (GFPR). The interval 391–424 (LRAVDPVTGEWYHSVYKPPPGPEVQARLRFNPQH) is LID 2. Arginine 392 contacts ATP. Arginine 432 lines the AMP pocket.

It belongs to the adenylate kinase family.

It localises to the cytoplasm. It is found in the cytosol. The catalysed reaction is AMP + ATP = 2 ADP. It catalyses the reaction a 2'-deoxyribonucleoside 5'-diphosphate + ATP = a 2'-deoxyribonucleoside 5'-triphosphate + ADP. The enzyme catalyses a ribonucleoside 5'-diphosphate + ATP = a ribonucleoside 5'-triphosphate + ADP. Nucleoside monophosphate (NMP) kinase that catalyzes the reversible transfer of the terminal phosphate group between nucleoside triphosphates and monophosphates. Has highest activity toward AMP, and weaker activity toward dAMP, CMP and dCMP. Also displays broad nucleoside diphosphate kinase activity. The sequence is that of Adenylate kinase 8 (ak8) from Danio rerio (Zebrafish).